The chain runs to 424 residues: Histidine--tRNA ligase (424 aa).

The protein belongs to the class-II aminoacyl-tRNA synthetase family. As to quaternary structure, homodimer.

It is found in the cytoplasm. It catalyses the reaction tRNA(His) + L-histidine + ATP = L-histidyl-tRNA(His) + AMP + diphosphate + H(+). In Edwardsiella ictaluri (strain 93-146), this protein is Histidine--tRNA ligase.